Here is a 249-residue protein sequence, read N- to C-terminus: Methylthioribulose-1-phosphate dehydratase (249 aa).

The Zn(2+) site is built by H103 and H105.

Belongs to the aldolase class II family. MtnB subfamily. Zn(2+) is required as a cofactor.

It carries out the reaction 5-(methylsulfanyl)-D-ribulose 1-phosphate = 5-methylsulfanyl-2,3-dioxopentyl phosphate + H2O. It participates in amino-acid biosynthesis; L-methionine biosynthesis via salvage pathway; L-methionine from S-methyl-5-thio-alpha-D-ribose 1-phosphate: step 2/6. Catalyzes the dehydration of methylthioribulose-1-phosphate (MTRu-1-P) into 2,3-diketo-5-methylthiopentyl-1-phosphate (DK-MTP-1-P). This is Methylthioribulose-1-phosphate dehydratase from Leptospira interrogans serogroup Icterohaemorrhagiae serovar Lai (strain 56601).